A 116-amino-acid polypeptide reads, in one-letter code: Dolichyl-diphosphooligosaccharide--protein glycosyltransferase subunit DAD1 (116 aa).

Residues 1-32 (MAKSSATKDAQALFHSLRSAYAATPTNLKIID) are Cytoplasmic-facing. The chain crosses the membrane as a helical span at residues 33 to 53 (LYVIFAISTALIQVVYMAIVG). Residues 54 to 56 (SFP) lie on the Lumenal side of the membrane. A helical transmembrane segment spans residues 57–77 (FNSFLSGVLSCIGTAVLAVCL). At 78–95 (RIQVNKENKEFKDLPPER) the chain is on the cytoplasmic side. The helical transmembrane segment at 96-116 (AFADFVLCNLVLHLVIMNFLG) threads the bilayer.

It belongs to the DAD/OST2 family. Component of the oligosaccharyltransferase (OST) complex.

It localises to the endoplasmic reticulum membrane. It participates in protein modification; protein glycosylation. Subunit of the oligosaccharyl transferase (OST) complex that catalyzes the initial transfer of a defined glycan (Glc(3)Man(9)GlcNAc(2) in eukaryotes) from the lipid carrier dolichol-pyrophosphate to an asparagine residue within an Asn-X-Ser/Thr consensus motif in nascent polypeptide chains, the first step in protein N-glycosylation. N-glycosylation occurs cotranslationally and the complex associates with the Sec61 complex at the channel-forming translocon complex that mediates protein translocation across the endoplasmic reticulum (ER). All subunits are required for a maximal enzyme activity. The sequence is that of Dolichyl-diphosphooligosaccharide--protein glycosyltransferase subunit DAD1 (DAD1) from Solanum lycopersicum (Tomato).